Reading from the N-terminus, the 187-residue chain is Casparian strip membrane protein 5 (187 aa).

Residues 1–24 (MKSGQAEIVETSKGIQKSGLMSRR) are Cytoplasmic-facing. Residues 25-45 (IAILEFILRIVAFFNTIGSAI) traverse the membrane as a helical segment. Residues 46-74 (LMGTTHETLPFFTQFIRFQAEYNDLPALT) are Extracellular-facing. Residues 75–95 (FFVVANAVVSGYLIMSLTLAF) form a helical membrane-spanning segment. At 96 to 107 (VHIVKRKTQNTR) the chain is on the cytoplasmic side. The chain crosses the membrane as a helical span at residues 108–128 (ILLIVLDVAMLGLLSAGASSA). At 129–161 (AAIVYLAHNGNNKTNWFAICQQFNSFCERISGS) the chain is on the extracellular side. N-linked (GlcNAc...) asparagine glycosylation occurs at asparagine 140. A helical transmembrane segment spans residues 162 to 182 (LIGSFIAVVLLILLILLSAIA). Residues 183–187 (LSRRH) lie on the Cytoplasmic side of the membrane.

Belongs to the Casparian strip membrane proteins (CASP) family. As to quaternary structure, homodimer and heterodimers.

It localises to the cell membrane. Functionally, regulates membrane-cell wall junctions and localized cell wall deposition. Required for establishment of the Casparian strip membrane domain (CSD) and the subsequent formation of Casparian strips, a cell wall modification of the root endodermis that determines an apoplastic barrier between the intraorganismal apoplasm and the extraorganismal apoplasm and prevents lateral diffusion. The polypeptide is Casparian strip membrane protein 5 (Arabidopsis lyrata subsp. lyrata (Lyre-leaved rock-cress)).